Reading from the N-terminus, the 226-residue chain is Thioredoxin domain-containing protein 9 (226 aa).

One can recognise a Thioredoxin domain in the interval 74-180 (REIPSERDFF…TTETLEWRLG (107 aa)). S188, S221, and S223 each carry phosphoserine.

As to quaternary structure, forms ternary complexes with the chaperonin TCP1 complex, spanning the cylindrical chaperonin cavity and contacting at least 2 subunits.

The protein resides in the cytoplasm. It is found in the nucleus. The protein localises to the cytoskeleton. It localises to the microtubule organizing center. Its subcellular location is the centrosome. The protein resides in the midbody. Significantly diminishes the chaperonin TCP1 complex ATPase activity, thus negatively impacts protein folding, including that of actin or tubulin. The chain is Thioredoxin domain-containing protein 9 (TXNDC9) from Homo sapiens (Human).